Here is a 351-residue protein sequence, read N- to C-terminus: DNA polymerase IV (351 aa).

Positions 4–185 constitute a UmuC domain; it reads IIHIDMDCFF…LPLAKIPGVG (182 aa). Mg(2+) contacts are provided by D8 and D103. E104 is an active-site residue.

Belongs to the DNA polymerase type-Y family. Monomer. Requires Mg(2+) as cofactor.

Its subcellular location is the cytoplasm. It carries out the reaction DNA(n) + a 2'-deoxyribonucleoside 5'-triphosphate = DNA(n+1) + diphosphate. Its function is as follows. Poorly processive, error-prone DNA polymerase involved in untargeted mutagenesis. Copies undamaged DNA at stalled replication forks, which arise in vivo from mismatched or misaligned primer ends. These misaligned primers can be extended by PolIV. Exhibits no 3'-5' exonuclease (proofreading) activity. May be involved in translesional synthesis, in conjunction with the beta clamp from PolIII. The chain is DNA polymerase IV from Salmonella paratyphi A (strain ATCC 9150 / SARB42).